Consider the following 418-residue polypeptide: Perilipin-1 homolog (418 aa).

The segment at 211–275 (LTIGQRVKNL…EKKTWVIEKS (65 aa)) is required for lipid droplet localization.

This sequence belongs to the perilipin family. In terms of tissue distribution, expressed in intestinal and epidermal cells. Expressed in the muscle and hypodermis.

The protein resides in the lipid droplet. Its function is as follows. Lipid droplet-associated protein which plays a role in lipid droplet clustering. This is Perilipin-1 homolog from Caenorhabditis elegans.